The sequence spans 339 residues: Caspase drICE (339 aa).

Positions 1–28 (MDATNNGESADQVGIRVGNPEQPNDHTD) are excised as a propeptide. The disordered stretch occupies residues 1–45 (MDATNNGESADQVGIRVGNPEQPNDHTDALGSVGSGGAGSSGLVA). Active-site residues include histidine 169 and cysteine 211. The propeptide occupies 218-230 (GGVTMQRSQTETD).

This sequence belongs to the peptidase C14A family. In terms of assembly, heterotetramer that consists of two anti-parallel arranged heterodimers, each one formed by a 21 kDa (p21) and a 12 kDa (p12) subunit. Inactive pro-form can homodimerize. Dronc and Drice can form a stable complex. Interacts with Diap2 (via BIR3 domain) to form a stable complex. May interact with some isoforms of Dark.

Its activity is regulated as follows. Zymogen activated by proteolytic cleavage; cleaved by the initiator caspase Dronc upon apoptosis induction. Its function is as follows. Involved in the activation cascade of caspases responsible for apoptosis execution. Acts downstream of rpr. Cleaves baculovirus p35 and lamin DmO in vitro. This chain is Caspase drICE (Drice), found in Drosophila melanogaster (Fruit fly).